The chain runs to 156 residues: Small ribosomal subunit protein uS7 (156 aa).

Belongs to the universal ribosomal protein uS7 family. As to quaternary structure, part of the 30S ribosomal subunit. Contacts proteins S9 and S11.

Functionally, one of the primary rRNA binding proteins, it binds directly to 16S rRNA where it nucleates assembly of the head domain of the 30S subunit. Is located at the subunit interface close to the decoding center, probably blocks exit of the E-site tRNA. In Rubrobacter xylanophilus (strain DSM 9941 / JCM 11954 / NBRC 16129 / PRD-1), this protein is Small ribosomal subunit protein uS7.